We begin with the raw amino-acid sequence, 440 residues long: tRNA(Ile)-lysidine synthase (440 aa).

An ATP-binding site is contributed by 13–18 (SGGADS).

It belongs to the tRNA(Ile)-lysidine synthase family.

The protein localises to the cytoplasm. The enzyme catalyses cytidine(34) in tRNA(Ile2) + L-lysine + ATP = lysidine(34) in tRNA(Ile2) + AMP + diphosphate + H(+). Its function is as follows. Ligates lysine onto the cytidine present at position 34 of the AUA codon-specific tRNA(Ile) that contains the anticodon CAU, in an ATP-dependent manner. Cytidine is converted to lysidine, thus changing the amino acid specificity of the tRNA from methionine to isoleucine. The sequence is that of tRNA(Ile)-lysidine synthase from Solibacter usitatus (strain Ellin6076).